The following is a 283-amino-acid chain: Bifunctional protein FolD (283 aa).

NADP(+)-binding positions include 164–166 (GSS), Ile-189, and Ile-230.

This sequence belongs to the tetrahydrofolate dehydrogenase/cyclohydrolase family. In terms of assembly, homodimer.

The enzyme catalyses (6R)-5,10-methylene-5,6,7,8-tetrahydrofolate + NADP(+) = (6R)-5,10-methenyltetrahydrofolate + NADPH. It carries out the reaction (6R)-5,10-methenyltetrahydrofolate + H2O = (6R)-10-formyltetrahydrofolate + H(+). Its pathway is one-carbon metabolism; tetrahydrofolate interconversion. In terms of biological role, catalyzes the oxidation of 5,10-methylenetetrahydrofolate to 5,10-methenyltetrahydrofolate and then the hydrolysis of 5,10-methenyltetrahydrofolate to 10-formyltetrahydrofolate. This is Bifunctional protein FolD from Fusobacterium nucleatum subsp. nucleatum (strain ATCC 25586 / DSM 15643 / BCRC 10681 / CIP 101130 / JCM 8532 / KCTC 2640 / LMG 13131 / VPI 4355).